A 395-amino-acid chain; its full sequence is Beta-1,4-galactosyltransferase 3 (395 aa).

The Cytoplasmic segment spans residues 1–10; the sequence is MLRRLLERPC. A helical; Signal-anchor for type II membrane protein transmembrane segment spans residues 11–31; that stretch reads TLALLVGSQLAVMMYLSLGGF. Residues 32-395 are Lumenal-facing; it reads RSLSALFGRD…ANHTAPRGSH (364 aa). Asparagine 57 carries an N-linked (GlcNAc...) asparagine glycan. Cysteine 79 and cysteine 121 are oxidised to a cystine. 132–136 contacts UDP-alpha-D-galactose; sequence PHRAR. Asparagine 168 carries an N-linked (GlcNAc...) asparagine glycan. UDP-alpha-D-galactose-binding positions include 171–173, 198–199, tyrosine 228, and tryptophan 260; these read FNR and VD. Cysteine 192 and cysteine 211 are oxidised to a cystine. Position 199 (aspartate 199) interacts with Mn(2+). 262–265 serves as a coordination point for N-acetyl-D-glucosamine; that stretch reads GEDD. Histidine 293 is a Mn(2+) binding site. Residue 293–295 coordinates UDP-alpha-D-galactose; the sequence is HRG. N-acetyl-D-glucosamine is bound at residue arginine 305. An N-linked (GlcNAc...) asparagine glycan is attached at asparagine 339. The interval 340–395 is disordered; sequence ITADIGTDPRGPRSPSGPRYPPGSSQAFRQEMLQRRPPARPGPLPTANHTAPRGSH. Residues 352-364 show a composition bias toward low complexity; that stretch reads RSPSGPRYPPGSS. The N-linked (GlcNAc...) asparagine glycan is linked to asparagine 387.

The protein belongs to the glycosyltransferase 7 family. Mn(2+) is required as a cofactor.

The protein resides in the golgi apparatus. It localises to the golgi stack membrane. The enzyme catalyses an N-acetyl-beta-D-glucosaminyl derivative + UDP-alpha-D-galactose = a beta-D-galactosyl-(1-&gt;4)-N-acetyl-beta-D-glucosaminyl derivative + UDP + H(+). The catalysed reaction is N-acetyl-D-glucosamine + UDP-alpha-D-galactose = beta-D-galactosyl-(1-&gt;4)-N-acetyl-D-glucosamine + UDP + H(+). It carries out the reaction a beta-D-GlcNAc-(1-&gt;3)-beta-D-Gal-(1-&gt;4)-beta-D-Glc-(1&lt;-&gt;1)-Cer(d18:1(4E)) + UDP-alpha-D-galactose = a neolactoside nLc4Cer(d18:1(4E)) + UDP + H(+). It catalyses the reaction a beta-D-glucosylceramide + UDP-alpha-D-galactose = a beta-D-galactosyl-(1-&gt;4)-beta-D-glucosyl-(1&lt;-&gt;1)-ceramide + UDP + H(+). The enzyme catalyses a neolactoside IV(3)-beta-GlcNAc-nLc4Cer + UDP-alpha-D-galactose = a neolactoside nLc6Cer + UDP + H(+). It participates in protein modification; protein glycosylation. In terms of biological role, responsible for the synthesis of complex-type N-linked oligosaccharides in many glycoproteins as well as the carbohydrate moieties of glycolipids. This chain is Beta-1,4-galactosyltransferase 3, found in Mus musculus (Mouse).